A 659-amino-acid chain; its full sequence is Macrolide export ATP-binding/permease protein MacB (659 aa).

The ABC transporter domain maps to 10–249 (IELRGIRKRY…QPLLHHAGLS (240 aa)). 47 to 54 (GSSGSGKS) is an ATP binding site. A run of 4 helical transmembrane segments spans residues 287–307 (SLTL…LAIG), 538–558 (LGLV…NVML), 594–614 (ITGG…LVFW), and 619–639 (VFSF…GLIF).

The protein belongs to the ABC transporter superfamily. Macrolide exporter (TC 3.A.1.122) family. Homodimer.

It localises to the cell inner membrane. Non-canonical ABC transporter that contains transmembrane domains (TMD), which form a pore in the inner membrane, and an ATP-binding domain (NBD), which is responsible for energy generation. Confers resistance against macrolides. The protein is Macrolide export ATP-binding/permease protein MacB of Nitrosomonas europaea (strain ATCC 19718 / CIP 103999 / KCTC 2705 / NBRC 14298).